Here is a 218-residue protein sequence, read N- to C-terminus: Ribose-5-phosphate isomerase A (218 aa).

Substrate contacts are provided by residues 28–31 (TGST), 81–84 (DGAD), and 94–97 (KGGG). Catalysis depends on E103, which acts as the Proton acceptor. Substrate is bound at residue K121.

Belongs to the ribose 5-phosphate isomerase family. As to quaternary structure, homodimer.

The catalysed reaction is aldehydo-D-ribose 5-phosphate = D-ribulose 5-phosphate. Its pathway is carbohydrate degradation; pentose phosphate pathway; D-ribose 5-phosphate from D-ribulose 5-phosphate (non-oxidative stage): step 1/1. In terms of biological role, catalyzes the reversible conversion of ribose-5-phosphate to ribulose 5-phosphate. This Shewanella piezotolerans (strain WP3 / JCM 13877) protein is Ribose-5-phosphate isomerase A.